The following is a 335-amino-acid chain: Large ribosomal subunit protein uL3 (335 aa).

Belongs to the universal ribosomal protein uL3 family. As to quaternary structure, part of the 50S ribosomal subunit. Forms a cluster with proteins L14 and L24e.

Functionally, one of the primary rRNA binding proteins, it binds directly near the 3'-end of the 23S rRNA, where it nucleates assembly of the 50S subunit. The sequence is that of Large ribosomal subunit protein uL3 from Methanocaldococcus jannaschii (strain ATCC 43067 / DSM 2661 / JAL-1 / JCM 10045 / NBRC 100440) (Methanococcus jannaschii).